A 123-amino-acid polypeptide reads, in one-letter code: Cysteine-rich DPF motif domain-containing protein 1 (123 aa).

A disordered region spans residues 102–123 (RQDLEKRKAPSKRTPSQPGSRT). The span at 114–123 (RTPSQPGSRT) shows a compositional bias: polar residues.

It belongs to the CDPF1 family.

This Homo sapiens (Human) protein is Cysteine-rich DPF motif domain-containing protein 1 (CDPF1).